A 157-amino-acid polypeptide reads, in one-letter code: Small ribosomal subunit protein uS7 (157 aa).

It belongs to the universal ribosomal protein uS7 family. As to quaternary structure, part of the 30S ribosomal subunit. Contacts proteins S9 and S11.

In terms of biological role, one of the primary rRNA binding proteins, it binds directly to 16S rRNA where it nucleates assembly of the head domain of the 30S subunit. Is located at the subunit interface close to the decoding center, probably blocks exit of the E-site tRNA. The chain is Small ribosomal subunit protein uS7 from Roseiflexus castenholzii (strain DSM 13941 / HLO8).